A 633-amino-acid polypeptide reads, in one-letter code: ATP-dependent clpX-like chaperone, mitochondrial (633 aa).

The transit peptide at 1 to 56 (MSSCGACTCGAAAARLLTTSLTSAQRGISCGRIHVPVLGRLGTLDTQILRRAPLRT) directs the protein to the mitochondrion. Residues 65–101 (ASKDGTNKDGSGDGNKKSVTEGSSKKSGSGNSGKGGN) form a disordered region. Over residues 69-83 (GTNKDGSGDGNKKSV) the composition is skewed to basic and acidic residues. The segment covering 84–93 (TEGSSKKSGS) has biased composition (low complexity). Positions 93 to 146 (SGNSGKGGNQLRCPKCGDLCTHVETFVSSTRFVKCEKCHHFFVVLSEADSKKSI) constitute a ClpX-type ZB domain. The Zn(2+) site is built by Cys-105, Cys-108, Cys-127, and Cys-130. Residue 294 to 301 (PTGSGKTL) participates in ATP binding. Lys-437 carries the post-translational modification N6-acetyllysine. The span at 598-610 (KEPGYIRAPSKES) shows a compositional bias: basic and acidic residues. A disordered region spans residues 598-633 (KEPGYIRAPSKESSEEDYDSGVEEDGWPRQADAANS). The segment covering 611-622 (SEEDYDSGVEED) has biased composition (acidic residues). Phosphoserine is present on Ser-617.

The protein belongs to the ClpX chaperone family. Homohexamer that forms a ring structure; this hexamerization requires ATP binding. Component of the ClpXP complex formed by the assembly of two CLPP heptameric rings with two CLPX hexameric rings, giving rise to a symmetrical structure with two central CLPP rings flanked by a CLPX ring at either end of the complex. Interacts with TFAM.

The protein resides in the mitochondrion. The protein localises to the mitochondrion matrix. It is found in the mitochondrion nucleoid. It carries out the reaction ATP + H2O = ADP + phosphate + H(+). Its function is as follows. ATP-dependent chaperone that functions as an unfoldase. As part of the ClpXP protease complex, it recognizes specific protein substrates, unfolds them using energy derived from ATP hydrolysis, and then translocates them to the proteolytic subunit (CLPP) of the ClpXP complex for degradation. Thanks to its chaperone activity, it also functions in the incorporation of the pyridoxal phosphate cofactor into 5-aminolevulinate synthase, thereby activating 5-aminolevulinate (ALA) synthesis, the first step in heme biosynthesis. This chaperone is also involved in the control of mtDNA nucleoid distribution, by regulating mitochondrial transcription factor A (TFAM) activity. The protein is ATP-dependent clpX-like chaperone, mitochondrial of Rattus norvegicus (Rat).